The chain runs to 316 residues: Pantothenate kinase (316 aa).

95 to 102 contacts ATP; it reads GSVAVGKS.

Belongs to the prokaryotic pantothenate kinase family.

It is found in the cytoplasm. The enzyme catalyses (R)-pantothenate + ATP = (R)-4'-phosphopantothenate + ADP + H(+). Its pathway is cofactor biosynthesis; coenzyme A biosynthesis; CoA from (R)-pantothenate: step 1/5. This is Pantothenate kinase from Shewanella baltica (strain OS195).